Reading from the N-terminus, the 272-residue chain is Alkaline ceramidase (272 aa).

Transmembrane regions (helical) follow at residues Phe34–Leu54 and Val61–Tyr81. Zn(2+) is bound at residue His83. 4 consecutive transmembrane segments (helical) span residues Leu96–Phe116, Leu124–Leu144, Leu148–Gly168, and Ile183–Phe203. Zn(2+) is bound by residues His213 and His217. Residues Ala214 to Ile234 form a helical membrane-spanning segment. The N-linked (GlcNAc...) asparagine glycan is linked to Asn256.

This sequence belongs to the alkaline ceramidase family. The cofactor is Zn(2+).

Its subcellular location is the membrane. It catalyses the reaction an N-acyl-sphingoid base + H2O = a sphingoid base + a fatty acid. The catalysed reaction is an N-acylsphing-4-enine + H2O = sphing-4-enine + a fatty acid. The enzyme catalyses an N-acyl-15-methylhexadecasphing-4-enine + H2O = 15-methylhexadecasphing-4-enine + a fatty acid. Its pathway is lipid metabolism; sphingolipid metabolism. In terms of biological role, hydrolyzes the sphingolipid ceramide into sphingoid base and free fatty acid. C.elegans contain specific sphingoid bases, which are unique or different in structure compared to the sphingoid bases found in other animals. Two examples of these distinctive compounds are: 15-methylhexadecasphinganine and 15-methylhexadecasphing-4-enine. This Caenorhabditis elegans protein is Alkaline ceramidase.